The sequence spans 513 residues: Na(+)/H(+) antiporter NhaB (513 aa).

12 helical membrane passes run 23–43, 52–72, 97–117, 120–140, 144–164, 202–222, 238–258, 303–323, 348–368, 391–411, 447–467, and 475–495; these read LALI…PFVA, IFTL…LLAI, LLLM…LFIF, LLLS…AAAF, FLDA…FYGI, LMMH…VGEP, FFLR…LTCL, AIIG…VGLI, TESL…AVII, LFYI…VGTI, ATPN…APLI, and VWMA…CVEF.

The protein belongs to the NhaB Na(+)/H(+) (TC 2.A.34) antiporter family.

It localises to the cell inner membrane. The catalysed reaction is 2 Na(+)(in) + 3 H(+)(out) = 2 Na(+)(out) + 3 H(+)(in). Functionally, na(+)/H(+) antiporter that extrudes sodium in exchange for external protons. This Escherichia coli O127:H6 (strain E2348/69 / EPEC) protein is Na(+)/H(+) antiporter NhaB.